A 423-amino-acid polypeptide reads, in one-letter code: Mannan endo-1,4-beta-mannosidase (423 aa).

An N-terminal signal peptide occupies residues 1 to 27; sequence MKTITTARLPWAAQSFALGICLIALLG. Residues 56–409 form the GH26 domain; that stretch reads METRSLFAFM…YADEFTAFNR (354 aa). E121, H143, and W162 together coordinate substrate. Residue E212 is the Proton donor of the active site. The substrate site is built by W217 and Y285. The active-site Nucleophile is E320. Substrate contacts are provided by residues 360–361 and H377; that span reads WR.

The protein belongs to the glycosyl hydrolase 26 family. As to quaternary structure, homodimer.

It carries out the reaction Random hydrolysis of (1-&gt;4)-beta-D-mannosidic linkages in mannans, galactomannans and glucomannans.. Functionally, catalyzes the endo hydrolysis of beta-1,4-linked mannan and galactomannan, but displays little activity towards other polysaccharides located in the plant cell wall. Preferentially hydrolyzes the larger oligosaccharides and has greater activity against non-substituted polysaccharides. It displays tight specificity for mannose at both the -2 and the -1 subsites. Appears to act in synergy with alpha-galactosidase (AgaA) to elicit hydrolysis of galactomannan. In Cellvibrio japonicus (strain Ueda107) (Pseudomonas fluorescens subsp. cellulosa), this protein is Mannan endo-1,4-beta-mannosidase.